A 186-amino-acid polypeptide reads, in one-letter code: TATA box-binding protein-like 1 (186 aa).

This sequence belongs to the TBP family. As to expression, expressed ubiquitously with highest expression in the ovary and testis.

It is found in the cytoplasm. Its subcellular location is the nucleus. Part of a specialized transcription system that mediates the transcription of most ribosomal proteins through the 5'-TCT-3' motif which is a core promoter element at these genes. Seems to also mediate the transcription of NF1. Does not bind the TATA box. Members of the TBP family are differentially required to regulate transcription and development during early embryogenesis. Particularly regulates genes that have a role in catabolism. This chain is TATA box-binding protein-like 1 (tbpl1), found in Xenopus laevis (African clawed frog).